The following is a 213-amino-acid chain: Uridine kinase (213 aa).

An ATP-binding site is contributed by 13–20; sequence GASASGKS.

It belongs to the uridine kinase family.

It localises to the cytoplasm. The enzyme catalyses uridine + ATP = UMP + ADP + H(+). The catalysed reaction is cytidine + ATP = CMP + ADP + H(+). Its pathway is pyrimidine metabolism; CTP biosynthesis via salvage pathway; CTP from cytidine: step 1/3. The protein operates within pyrimidine metabolism; UMP biosynthesis via salvage pathway; UMP from uridine: step 1/1. The chain is Uridine kinase from Haemophilus influenzae (strain PittGG).